A 186-amino-acid chain; its full sequence is Ribosome-recycling factor (186 aa).

It belongs to the RRF family.

The protein resides in the cytoplasm. Functionally, responsible for the release of ribosomes from messenger RNA at the termination of protein biosynthesis. May increase the efficiency of translation by recycling ribosomes from one round of translation to another. This Chlorobium phaeobacteroides (strain BS1) protein is Ribosome-recycling factor.